A 191-amino-acid polypeptide reads, in one-letter code: Cell division protein SepF (191 aa).

The span at glutamate 156–glycine 167 shows a compositional bias: polar residues. The segment at glutamate 156 to leucine 191 is disordered.

The protein belongs to the SepF family. Homodimer. Interacts with FtsZ.

It localises to the cytoplasm. Cell division protein that is part of the divisome complex and is recruited early to the Z-ring. Probably stimulates Z-ring formation, perhaps through the cross-linking of FtsZ protofilaments. Its function overlaps with FtsA. The sequence is that of Cell division protein SepF from Prochlorococcus marinus (strain NATL2A).